We begin with the raw amino-acid sequence, 426 residues long: Serine--tRNA ligase (426 aa).

233-235 provides a ligand contact to L-serine; sequence TSE. Residue 264 to 266 participates in ATP binding; sequence RAE. L-serine is bound at residue glutamate 287. ATP is bound at residue 351–354; sequence EISS. Residue serine 387 coordinates L-serine.

Belongs to the class-II aminoacyl-tRNA synthetase family. Type-1 seryl-tRNA synthetase subfamily. In terms of assembly, homodimer. The tRNA molecule binds across the dimer.

It is found in the cytoplasm. The catalysed reaction is tRNA(Ser) + L-serine + ATP = L-seryl-tRNA(Ser) + AMP + diphosphate + H(+). The enzyme catalyses tRNA(Sec) + L-serine + ATP = L-seryl-tRNA(Sec) + AMP + diphosphate + H(+). It participates in aminoacyl-tRNA biosynthesis; selenocysteinyl-tRNA(Sec) biosynthesis; L-seryl-tRNA(Sec) from L-serine and tRNA(Sec): step 1/1. Functionally, catalyzes the attachment of serine to tRNA(Ser). Is also able to aminoacylate tRNA(Sec) with serine, to form the misacylated tRNA L-seryl-tRNA(Sec), which will be further converted into selenocysteinyl-tRNA(Sec). This chain is Serine--tRNA ligase, found in Xanthomonas euvesicatoria pv. vesicatoria (strain 85-10) (Xanthomonas campestris pv. vesicatoria).